The primary structure comprises 236 residues: uncharacterized protein (236 aa).

The region spanning 117-160 (RYLSKQTDRNEFITTAESYIGISKHKSTNITYKLPLKEQFCNMS) is the RPE1 insert domain.

This is an uncharacterized protein from Rickettsia prowazekii (strain Madrid E).